Consider the following 456-residue polypeptide: Bifunctional protein GlmU (456 aa).

A pyrophosphorylase region spans residues 1–229 (MLNSAMSVVI…ISETDGVNNR (229 aa)). Residues 11 to 14 (LAAG), lysine 25, glutamine 76, 81 to 82 (GT), 103 to 105 (YGD), glycine 140, glutamate 154, asparagine 169, and asparagine 227 contribute to the UDP-N-acetyl-alpha-D-glucosamine site. Aspartate 105 contacts Mg(2+). Asparagine 227 is a binding site for Mg(2+). A linker region spans residues 230–250 (LQLSRLERIYQAEQAEKLLLS). The segment at 251 to 456 (GVMLRDPARF…QGWQRPVKKK (206 aa)) is N-acetyltransferase. UDP-N-acetyl-alpha-D-glucosamine contacts are provided by arginine 333 and lysine 351. The Proton acceptor role is filled by histidine 363. 2 residues coordinate UDP-N-acetyl-alpha-D-glucosamine: tyrosine 366 and asparagine 377. Residues alanine 380, 386–387 (NY), serine 405, alanine 423, and arginine 440 each bind acetyl-CoA.

It in the N-terminal section; belongs to the N-acetylglucosamine-1-phosphate uridyltransferase family. In the C-terminal section; belongs to the transferase hexapeptide repeat family. In terms of assembly, homotrimer. The cofactor is Mg(2+).

It is found in the cytoplasm. It catalyses the reaction alpha-D-glucosamine 1-phosphate + acetyl-CoA = N-acetyl-alpha-D-glucosamine 1-phosphate + CoA + H(+). It carries out the reaction N-acetyl-alpha-D-glucosamine 1-phosphate + UTP + H(+) = UDP-N-acetyl-alpha-D-glucosamine + diphosphate. Its pathway is nucleotide-sugar biosynthesis; UDP-N-acetyl-alpha-D-glucosamine biosynthesis; N-acetyl-alpha-D-glucosamine 1-phosphate from alpha-D-glucosamine 6-phosphate (route II): step 2/2. It participates in nucleotide-sugar biosynthesis; UDP-N-acetyl-alpha-D-glucosamine biosynthesis; UDP-N-acetyl-alpha-D-glucosamine from N-acetyl-alpha-D-glucosamine 1-phosphate: step 1/1. The protein operates within bacterial outer membrane biogenesis; LPS lipid A biosynthesis. Functionally, catalyzes the last two sequential reactions in the de novo biosynthetic pathway for UDP-N-acetylglucosamine (UDP-GlcNAc). The C-terminal domain catalyzes the transfer of acetyl group from acetyl coenzyme A to glucosamine-1-phosphate (GlcN-1-P) to produce N-acetylglucosamine-1-phosphate (GlcNAc-1-P), which is converted into UDP-GlcNAc by the transfer of uridine 5-monophosphate (from uridine 5-triphosphate), a reaction catalyzed by the N-terminal domain. The protein is Bifunctional protein GlmU of Salmonella dublin (strain CT_02021853).